The sequence spans 203 residues: uncharacterized protein (203 aa).

A disordered region spans residues 174 to 203; sequence LASSKNPRARSPGLDPLGSSETLWSHRGGH.

This is an uncharacterized protein from Homo sapiens (Human).